Here is a 110-residue protein sequence, read N- to C-terminus: Senescence associated gene 20 (110 aa).

The protein is Senescence associated gene 20 of Arabidopsis thaliana (Mouse-ear cress).